The primary structure comprises 394 residues: Elongation factor Tu 1 (394 aa).

The region spanning 10–204 (KPHVNVGTIG…ALDSYIPEPE (195 aa)) is the tr-type G domain. Residues 19–26 (GHVDHGKT) are G1. 19–26 (GHVDHGKT) serves as a coordination point for GTP. Residue Thr-26 coordinates Mg(2+). A G2 region spans residues 60–64 (GITIN). Residues 81–84 (DCPG) form a G3 region. GTP is bound by residues 81 to 85 (DCPGH) and 136 to 139 (NKCD). Residues 136 to 139 (NKCD) are G4. Residues 174-176 (SAL) are G5.

Belongs to the TRAFAC class translation factor GTPase superfamily. Classic translation factor GTPase family. EF-Tu/EF-1A subfamily. In terms of assembly, monomer.

It is found in the cytoplasm. The catalysed reaction is GTP + H2O = GDP + phosphate + H(+). GTP hydrolase that promotes the GTP-dependent binding of aminoacyl-tRNA to the A-site of ribosomes during protein biosynthesis. The chain is Elongation factor Tu 1 from Shewanella sp. (strain MR-4).